The chain runs to 229 residues: Transmembrane emp24 domain-containing protein 5 (229 aa).

Residues 1–27 form the signal peptide; the sequence is MGVRMWLPFPMLLLSALPATLLSGAAG. Residues 28–196 lie on the Lumenal side of the membrane; it reads FTPSLDSDFT…IQESNFDRVN (169 aa). Positions 45–126 constitute a GOLD domain; the sequence is KECFYQPMPL…EKVIFFELIL (82 aa). A helical membrane pass occupies residues 197-217; that stretch reads FWSVVNLMVMVVVSAIQVYTL. At 218 to 229 the chain is on the cytoplasmic side; sequence KSLFEDKRKSRT.

This sequence belongs to the EMP24/GP25L family. As to quaternary structure, interacts with TMED9 and TMED10.

The protein localises to the endoplasmic reticulum membrane. It localises to the golgi apparatus. The protein resides in the cis-Golgi network membrane. It is found in the endoplasmic reticulum-Golgi intermediate compartment membrane. Its function is as follows. Potential role in vesicular protein trafficking, mainly in the early secretory pathway. Required for the maintenance of the Golgi apparatus; involved in protein exchange between Golgi stacks during assembly. Probably not required for COPI-vesicle-mediated retrograde transport. The chain is Transmembrane emp24 domain-containing protein 5 (Tmed5) from Rattus norvegicus (Rat).